The sequence spans 571 residues: Proline--tRNA ligase (571 aa).

The protein belongs to the class-II aminoacyl-tRNA synthetase family. ProS type 1 subfamily. Homodimer.

It localises to the cytoplasm. The catalysed reaction is tRNA(Pro) + L-proline + ATP = L-prolyl-tRNA(Pro) + AMP + diphosphate. Catalyzes the attachment of proline to tRNA(Pro) in a two-step reaction: proline is first activated by ATP to form Pro-AMP and then transferred to the acceptor end of tRNA(Pro). As ProRS can inadvertently accommodate and process non-cognate amino acids such as alanine and cysteine, to avoid such errors it has two additional distinct editing activities against alanine. One activity is designated as 'pretransfer' editing and involves the tRNA(Pro)-independent hydrolysis of activated Ala-AMP. The other activity is designated 'posttransfer' editing and involves deacylation of mischarged Ala-tRNA(Pro). The misacylated Cys-tRNA(Pro) is not edited by ProRS. The sequence is that of Proline--tRNA ligase from Vibrio campbellii (strain ATCC BAA-1116).